We begin with the raw amino-acid sequence, 457 residues long: Proton extrusion protein PxcA (457 aa).

Helical transmembrane passes span 239–259, 332–352, 368–390, and 417–437; these read FILL…TFFL, INAI…GVVI, GILY…DMFV, and FNFL…KYWI.

The protein belongs to the CemA family.

The protein resides in the cell inner membrane. Functionally, required for H(+) efflux immediately after light irradiation to form a rapid H(+) concentration gradient across the thylakoid membranes. Together with PxcL, contributes to transient H(+) uptake following dark to light transition. This is Proton extrusion protein PxcA from Gloeothece citriformis (strain PCC 7424) (Cyanothece sp. (strain PCC 7424)).